A 477-amino-acid chain; its full sequence is ATP synthase subunit beta (477 aa).

148–155 (GGAGVGKT) is an ATP binding site.

The protein belongs to the ATPase alpha/beta chains family. F-type ATPases have 2 components, CF(1) - the catalytic core - and CF(0) - the membrane proton channel. CF(1) has five subunits: alpha(3), beta(3), gamma(1), delta(1), epsilon(1). CF(0) has three main subunits: a(1), b(2) and c(9-12). The alpha and beta chains form an alternating ring which encloses part of the gamma chain. CF(1) is attached to CF(0) by a central stalk formed by the gamma and epsilon chains, while a peripheral stalk is formed by the delta and b chains.

It is found in the cell inner membrane. It catalyses the reaction ATP + H2O + 4 H(+)(in) = ADP + phosphate + 5 H(+)(out). Produces ATP from ADP in the presence of a proton gradient across the membrane. The catalytic sites are hosted primarily by the beta subunits. This is ATP synthase subunit beta from Psychrobacter cryohalolentis (strain ATCC BAA-1226 / DSM 17306 / VKM B-2378 / K5).